We begin with the raw amino-acid sequence, 725 residues long: Dipeptidyl-peptidase 5 (725 aa).

A signal peptide spans 1–18 (MGALRWLSIAATASTALA). 6 N-linked (GlcNAc...) asparagine glycosylation sites follow: asparagine 75, asparagine 96, asparagine 153, asparagine 258, asparagine 383, and asparagine 453. Catalysis depends on serine 563, which acts as the Charge relay system. Asparagine 610 is a glycosylation site (N-linked (GlcNAc...) asparagine). Active-site charge relay system residues include aspartate 646 and histidine 678.

It belongs to the peptidase S9C family.

The protein resides in the secreted. This chain is Dipeptidyl-peptidase 5, found in Aspergillus oryzae (strain ATCC 42149 / RIB 40) (Yellow koji mold).